Consider the following 139-residue polypeptide: Large ribosomal subunit protein uL14A (139 aa).

Belongs to the universal ribosomal protein uL14 family. Component of the large ribosomal subunit (LSU). Mature yeast ribosomes consist of a small (40S) and a large (60S) subunit. The 40S small subunit contains 1 molecule of ribosomal RNA (18S rRNA) and at least 33 different proteins. The large 60S subunit contains 3 rRNA molecules (25S, 5.8S and 5S rRNA) and at least 46 different proteins.

It localises to the cytoplasm. It is found in the nucleus. Functionally, component of the ribosome, a large ribonucleoprotein complex responsible for the synthesis of proteins in the cell. The small ribosomal subunit (SSU) binds messenger RNAs (mRNAs) and translates the encoded message by selecting cognate aminoacyl-transfer RNA (tRNA) molecules. The large subunit (LSU) contains the ribosomal catalytic site termed the peptidyl transferase center (PTC), which catalyzes the formation of peptide bonds, thereby polymerizing the amino acids delivered by tRNAs into a polypeptide chain. The nascent polypeptides leave the ribosome through a tunnel in the LSU and interact with protein factors that function in enzymatic processing, targeting, and the membrane insertion of nascent chains at the exit of the ribosomal tunnel. In Schizosaccharomyces pombe (strain 972 / ATCC 24843) (Fission yeast), this protein is Large ribosomal subunit protein uL14A (rpl2301).